The chain runs to 59 residues: Large ribosomal subunit protein bL32c (59 aa).

The interval 37 to 59 (SRSFSRGNEHPKPKGFSGQQANK) is disordered.

The protein belongs to the bacterial ribosomal protein bL32 family.

The protein localises to the plastid. Its subcellular location is the chloroplast. This is Large ribosomal subunit protein bL32c (rpl32) from Zea mays (Maize).